The following is a 443-amino-acid chain: 23S rRNA (uracil(1939)-C(5))-methyltransferase RlmD (443 aa).

The 59-residue stretch at 12–70 folds into the TRAM domain; sequence AKKLSQKIALKVQRLDHLGAGIAEHQGKVVFIPGALPGETVEVQLTEQKKNYARAKLQR. [4Fe-4S] cluster contacts are provided by C83, C89, C92, and C171. The S-adenosyl-L-methionine site is built by Q276, F305, N310, E326, D353, and D373. The active-site Nucleophile is the C399.

Belongs to the class I-like SAM-binding methyltransferase superfamily. RNA M5U methyltransferase family. RlmD subfamily.

It carries out the reaction uridine(1939) in 23S rRNA + S-adenosyl-L-methionine = 5-methyluridine(1939) in 23S rRNA + S-adenosyl-L-homocysteine + H(+). In terms of biological role, catalyzes the formation of 5-methyl-uridine at position 1939 (m5U1939) in 23S rRNA. The protein is 23S rRNA (uracil(1939)-C(5))-methyltransferase RlmD of Shewanella amazonensis (strain ATCC BAA-1098 / SB2B).